Consider the following 383-residue polypeptide: DNA dC-&gt;dU-editing enzyme APOBEC-3G (383 aa).

An essential for cytoplasmic localization region spans residues 1–60 (MKPHFRNTVERMYRGTFFYNFNNRPILSRRNTVWLCYEVKTRGPSMPTWGAKIFRGQLYP). CMP/dCMP-type deaminase domains follow at residues 29–138 (RRNT…LRIL) and 214–327 (GQRE…LRTL). Phosphothreonine; by PKA is present on Thr-32. Residues His-65, Cys-97, and Cys-100 each contribute to the Zn(2+) site. Positions 209–335 (KPWVSGQRET…TLHRDGAKIA (127 aa)) are necessary for homooligomerization. The segment at 213-215 (SGQ) is interaction with DNA. Thr-218 bears the Phosphothreonine; by PKA and CAMK2 mark. His-257 contributes to the Zn(2+) binding site. Residue Glu-259 is the Proton donor of the active site. Cys-287 and Cys-290 together coordinate Zn(2+). The interval 312 to 319 (RIYDDQGR) is interaction with DNA.

The protein belongs to the cytidine and deoxycytidylate deaminase family. In terms of assembly, homodimer. Homooligomer. Can bind RNA to form ribonucleoprotein complexes of high-molecular-mass (HMM) or low-molecular-mass (LMM). HMM is inactive and heterogeneous in protein composition because of binding nonselectively to cellular RNAs, which in turn are associated with variety of cellular proteins. The LMM form which is enzymatically active has few or no RNAs associated. Its ability to form homooligomer is distinct from its ability to assemble into HMM. Interacts with APOBEC3B, APOBEC3F, MOV10, AGO2, EIF4E, EIF4ENIF1, DCP2 and DDX6 in an RNA-dependent manner. Interacts with AGO1, AGO3 and PKA/PRKACA. Zn(2+) serves as cofactor.

It is found in the cytoplasm. The protein resides in the nucleus. It localises to the P-body. The catalysed reaction is a 2'-deoxycytidine in single-stranded DNA + H2O + H(+) = a 2'-deoxyuridine in single-stranded DNA + NH4(+). In terms of biological role, DNA deaminase (cytidine deaminase) which acts as an inhibitor of retrovirus replication and retrotransposon mobility. After the penetration of retroviral nucleocapsids into target cells of infection and the initiation of reverse transcription, it can induce the conversion of cytosine to uracil in the minus-sense single-strand viral DNA, leading to G-to-A hypermutations in the subsequent plus-strand viral DNA. The resultant detrimental levels of mutations in the proviral genome, along with a deamination-independent mechanism that works prior to the proviral integration, together exert efficient antiretroviral effects in infected target cells. Selectively targets single-stranded DNA and does not deaminate double-stranded DNA or single- or double-stranded RNA. The protein is DNA dC-&gt;dU-editing enzyme APOBEC-3G (APOBEC3G) of Erythrocebus patas (Red guenon).